Consider the following 749-residue polypeptide: uncharacterized protein (749 aa).

Residues 63-243 (FQYVQKGESI…QLTGKPMRLV (181 aa)) form the Helicase ATP-binding domain. 76-83 (TPTASGKT) lines the ATP pocket. Positions 185–188 (DELH) match the DEVH box motif. One can recognise a Helicase C-terminal domain in the interval 276–430 (EVNELAKEFL…SARINPENLI (155 aa)).

This sequence belongs to the helicase family.

This is an uncharacterized protein from Bacillus subtilis (strain 168).